Consider the following 394-residue polypeptide: MPDKFKRVHVVVMDSVGIGEAPDAAKFGDFDVDTFGHIAKHVGGLNMPEMGKLGLSNIREIDGIKKAEKPLAYYTKMQEASNGKDTMTGHWEIMGLYIDTPFRVFPDGFPDDLINQIEEKTGRKVIGNKPASGTEIMAELGEEHVKTGALIVYTSADSVLQIAAHEDVVPLEELYEICEFCREITLDDPYMLGRIIARPFVGEPGAFVRTPNRHDYALKPFKPTVMDALKDGGKDVIAIGKISDIFDGEGVTESIRTKSNMDGMDQFIAVLDKDFNGMSFLNLVDFDALFGHRRDPQGYADALVDFDGRLVEVMEKLTEDDLLIITADHGNDPTYTGTDHTREFVPLLVYSPRFKNGGSELELRKTFADLGATVADNFDVKMPEYGKSFLKDLK.

Mn(2+) is bound by residues D14, D287, H292, D328, H329, and H340.

The protein belongs to the phosphopentomutase family. It depends on Mn(2+) as a cofactor.

It is found in the cytoplasm. The catalysed reaction is 2-deoxy-alpha-D-ribose 1-phosphate = 2-deoxy-D-ribose 5-phosphate. It catalyses the reaction alpha-D-ribose 1-phosphate = D-ribose 5-phosphate. Its pathway is carbohydrate degradation; 2-deoxy-D-ribose 1-phosphate degradation; D-glyceraldehyde 3-phosphate and acetaldehyde from 2-deoxy-alpha-D-ribose 1-phosphate: step 1/2. In terms of biological role, isomerase that catalyzes the conversion of deoxy-ribose 1-phosphate (dRib-1-P) and ribose 1-phosphate (Rib-1-P) to deoxy-ribose 5-phosphate (dRib-5-P) and ribose 5-phosphate (Rib-5-P), respectively. The chain is Phosphopentomutase from Listeria welshimeri serovar 6b (strain ATCC 35897 / DSM 20650 / CCUG 15529 / CIP 8149 / NCTC 11857 / SLCC 5334 / V8).